The primary structure comprises 72 residues: Translation initiation factor IF-1 (72 aa).

The region spanning 1–72 is the S1-like domain; sequence MAKDNVIEIE…SKGRITYRFK (72 aa).

It belongs to the IF-1 family. Component of the 30S ribosomal translation pre-initiation complex which assembles on the 30S ribosome in the order IF-2 and IF-3, IF-1 and N-formylmethionyl-tRNA(fMet); mRNA recruitment can occur at any time during PIC assembly.

Its subcellular location is the cytoplasm. In terms of biological role, one of the essential components for the initiation of protein synthesis. Stabilizes the binding of IF-2 and IF-3 on the 30S subunit to which N-formylmethionyl-tRNA(fMet) subsequently binds. Helps modulate mRNA selection, yielding the 30S pre-initiation complex (PIC). Upon addition of the 50S ribosomal subunit IF-1, IF-2 and IF-3 are released leaving the mature 70S translation initiation complex. The chain is Translation initiation factor IF-1 from Pediococcus pentosaceus (strain ATCC 25745 / CCUG 21536 / LMG 10740 / 183-1w).